A 131-amino-acid polypeptide reads, in one-letter code: Large ribosomal subunit protein bL12 (131 aa).

Belongs to the bacterial ribosomal protein bL12 family. As to quaternary structure, homodimer. Part of the ribosomal stalk of the 50S ribosomal subunit. Forms a multimeric L10(L12)X complex, where L10 forms an elongated spine to which 2 to 4 L12 dimers bind in a sequential fashion. Binds GTP-bound translation factors.

Its function is as follows. Forms part of the ribosomal stalk which helps the ribosome interact with GTP-bound translation factors. Is thus essential for accurate translation. The chain is Large ribosomal subunit protein bL12 from Prochlorococcus marinus (strain MIT 9515).